The sequence spans 183 residues: ATP synthase subunit b, chloroplastic (183 aa).

Residues 25–45 (DILATNLINLTVVVGVLIFFG) traverse the membrane as a helical segment.

Belongs to the ATPase B chain family. In terms of assembly, F-type ATPases have 2 components, F(1) - the catalytic core - and F(0) - the membrane proton channel. F(1) has five subunits: alpha(3), beta(3), gamma(1), delta(1), epsilon(1). F(0) has four main subunits: a(1), b(1), b'(1) and c(10-14). The alpha and beta chains form an alternating ring which encloses part of the gamma chain. F(1) is attached to F(0) by a central stalk formed by the gamma and epsilon chains, while a peripheral stalk is formed by the delta, b and b' chains.

The protein resides in the plastid. It localises to the chloroplast thylakoid membrane. Its function is as follows. F(1)F(0) ATP synthase produces ATP from ADP in the presence of a proton or sodium gradient. F-type ATPases consist of two structural domains, F(1) containing the extramembraneous catalytic core and F(0) containing the membrane proton channel, linked together by a central stalk and a peripheral stalk. During catalysis, ATP synthesis in the catalytic domain of F(1) is coupled via a rotary mechanism of the central stalk subunits to proton translocation. Functionally, component of the F(0) channel, it forms part of the peripheral stalk, linking F(1) to F(0). The chain is ATP synthase subunit b, chloroplastic from Saccharum hybrid (Sugarcane).